The sequence spans 421 residues: 3-isopropylmalate dehydratase large subunit (421 aa).

3 residues coordinate [4Fe-4S] cluster: Cys300, Cys360, and Cys363.

The protein belongs to the aconitase/IPM isomerase family. LeuC type 2 subfamily. Heterodimer of LeuC and LeuD. [4Fe-4S] cluster serves as cofactor.

The enzyme catalyses (2R,3S)-3-isopropylmalate = (2S)-2-isopropylmalate. The protein operates within amino-acid biosynthesis; L-leucine biosynthesis; L-leucine from 3-methyl-2-oxobutanoate: step 2/4. Its function is as follows. Catalyzes the isomerization between 2-isopropylmalate and 3-isopropylmalate, via the formation of 2-isopropylmaleate. This chain is 3-isopropylmalate dehydratase large subunit, found in Lachnoclostridium phytofermentans (strain ATCC 700394 / DSM 18823 / ISDg) (Clostridium phytofermentans).